A 407-amino-acid polypeptide reads, in one-letter code: Serine/threonine transporter SstT (407 aa).

Helical transmembrane passes span 12–32 (GNLI…GISS), 42–62 (LGIL…FILI), 81–101 (IIIL…LANF), 141–161 (ALSS…GIAL), 179–199 (VLKI…GLVA), 218–238 (ILLV…IVFF), 245–267 (FPLI…SSAA), 288–308 (ISIP…IAIL), and 330–350 (IIAT…LLLI).

Belongs to the dicarboxylate/amino acid:cation symporter (DAACS) (TC 2.A.23) family.

It localises to the cell inner membrane. It carries out the reaction L-serine(in) + Na(+)(in) = L-serine(out) + Na(+)(out). It catalyses the reaction L-threonine(in) + Na(+)(in) = L-threonine(out) + Na(+)(out). Its function is as follows. Involved in the import of serine and threonine into the cell, with the concomitant import of sodium (symport system). The sequence is that of Serine/threonine transporter SstT from Campylobacter jejuni subsp. jejuni serotype O:23/36 (strain 81-176).